Consider the following 965-residue polypeptide: MNPQASLDRLAQRLSDAENLFKKVRVLVDLESAPLSLRSLSDPVRIASFLNTLSDRGNEYLAFIRHRPAFYLLRVASFGEQVPLGAGDLQGAVGLLTSAVRAFKDLKPPPEGTPAPANNLLENSNILTRLSQFIAHLRSLDLSQPVTFTPPASLVTLRCIEEITFSFWHAHWTAPPEVSLPKPNPQSKLERWLALSYAAALGAARDNAPKHRRELRALAKSLLTTERDLFAPVSVVTETSLTLPLAKERAREIFSMVDDALPGDAAARGAPVLGFRDADLNAASPEYVFLYEHVFEALLHDQTYGCARRTVEAFLERCLKFLVNLGSYVQTACSNKSHLSPPEIEGVRAAFHACGLTREACHTFSTMLAIAPAGGAASRLKHLHATVQHLEQITVFGRHFYECLRRCSPTSISHRLVREVLRTAQVEQNSATPWTAGAAEGSALGWPVHSYLRIFLPRPPEDDLAATFKAASESNFMKSLIGVSVKRDWDLNKFYVLSKKAPGGGGNGEGGSGGGNGGAGTVSRKQVRKFCEGLNPGDADYALEVVQSKYFAPEFARAVLLPELEAMLRGRVRRHVMLFRLRWLVLFAFEDAAGLAHIRRPLTLAYFQLTEIFGQGGVGSGAGAAGGGDGGALGNLLDHFHEAWTAARELVPEAGGEVPHELLTNIYRSLHAPAAREQLAAAAAFLKEIKPLVEGTWNMMRIASVLCHARYNYLSASGHLRVPFGEKPGYVDVPVPVFKETVKIMESSLHETLVILSQACQDLQRFYAACLGILDQNQFLATHPVQLDLSEPDFQAVKETLLGCLRRYREVASLAAGSCCFSLTRHFGALFDPPLITEAVVRKVLEFSEERDTTDAFIESLQQPIAKVEEEDWDDAPPKHALNDYDLTALREINESFPLPKQHGNNPPETTPSIKLSYTDSVNVSQITLDWEKFLRTSYIPQDAITSEFSHITVKKLEQSITGSF.

The interval 489–965 (WDLNKFYVLS…KLEQSITGSF (477 aa)) is interaction with large tegument protein.

The protein belongs to the herpesviridae inner tegument protein family. Interacts (via C-terminus) with the large tegument protein/LTP (via N-terminus).

It is found in the virion tegument. It localises to the host cytoplasm. The protein resides in the host nucleus. Its subcellular location is the host Golgi apparatus. The protein localises to the host trans-Golgi network. In terms of biological role, plays an essential role in cytoplasmic secondary envelopment during viral egress. Interacts with the capsid via the large tegument protein/LTP and participates in its transport to the host trans-Golgi network (TGN) where secondary envelopment occurs. Modulates tegumentation and capsid accumulation at the viral assembly complex. This Equine herpesvirus 2 (strain 86/87) (EHV-2) protein is Inner tegument protein (63).